The primary structure comprises 90 residues: Mitochondrial import inner membrane translocase subunit Tim10-B (90 aa).

The Twin CX3C motif motif lies at 29–54 (CHKKCVPPHYKEAELSKGESVCLDRC). Intrachain disulfides connect C29/C54 and C33/C50.

Belongs to the small Tim family. As to quaternary structure, heterohexamer; composed of 3 copies of TIMM9 and 3 copies of TIMM10/TIM10A, named soluble 70 kDa complex. The complex forms a 6-bladed alpha-propeller structure and associates with the TIMM22 component of the TIM22 complex. Interacts with multi-pass transmembrane proteins in transit.

It is found in the mitochondrion inner membrane. Functionally, mitochondrial intermembrane chaperone that participates in the import and insertion of multi-pass transmembrane proteins into the mitochondrial inner membrane. May also be required for the transfer of beta-barrel precursors from the TOM complex to the sorting and assembly machinery (SAM complex) of the outer membrane. Acts as a chaperone-like protein that protects the hydrophobic precursors from aggregation and guide them through the mitochondrial intermembrane space. The chain is Mitochondrial import inner membrane translocase subunit Tim10-B (timm10-b) from Xenopus laevis (African clawed frog).